The following is a 481-amino-acid chain: ATP synthase subunit beta, chloroplastic (481 aa).

An ATP-binding site is contributed by 163-170; the sequence is GGAGVGKT.

This sequence belongs to the ATPase alpha/beta chains family. As to quaternary structure, F-type ATPases have 2 components, CF(1) - the catalytic core - and CF(0) - the membrane proton channel. CF(1) has five subunits: alpha(3), beta(3), gamma(1), delta(1), epsilon(1). CF(0) has four main subunits: a(1), b(1), b'(1) and c(9-12).

The protein resides in the plastid. Its subcellular location is the chloroplast thylakoid membrane. The catalysed reaction is ATP + H2O + 4 H(+)(in) = ADP + phosphate + 5 H(+)(out). Functionally, produces ATP from ADP in the presence of a proton gradient across the membrane. The catalytic sites are hosted primarily by the beta subunits. The sequence is that of ATP synthase subunit beta, chloroplastic from Tupiella akineta (Green alga).